Consider the following 62-residue polypeptide: Keratin-associated protein 19-5 (62 aa).

Positions 5 to 56 are 14 X 2 AA repeats of G-[YCGS]; the sequence is GSYYGGLGSGIRGFGNLGYGYGCGCGFGGYGYGSGYGRYGYGYPRPLYYGGY.

Belongs to the KRTAP type 19 family. As to quaternary structure, interacts with hair keratins. As to expression, expressed in skin during two hair growth cycles. Expression restricted to the cortical cells of hair follicles, appearing first in the cortical cells processing the flat nuclei located a few cells above the dermal papilla.

In terms of biological role, in the hair cortex, hair keratin intermediate filaments are embedded in an interfilamentous matrix, consisting of hair keratin-associated proteins (KRTAP), which are essential for the formation of a rigid and resistant hair shaft through their extensive disulfide bond cross-linking with abundant cysteine residues of hair keratins. The matrix proteins include the high-sulfur and high-glycine-tyrosine keratins. The protein is Keratin-associated protein 19-5 (Krtap19-5) of Mus musculus (Mouse).